We begin with the raw amino-acid sequence, 288 residues long: Energy-coupling factor transporter ATP-binding protein EcfA3 (288 aa).

In terms of domain architecture, ABC transporter spans 3 to 245 (INFRNVSFSY…ESYLRKEKLR (243 aa)). 40 to 47 (GHTGSGKS) contributes to the ATP binding site.

This sequence belongs to the ABC transporter superfamily. Energy-coupling factor EcfA family. Forms a stable energy-coupling factor (ECF) transporter complex composed of 2 membrane-embedded substrate-binding proteins (S component), 2 ATP-binding proteins (A component) and 2 transmembrane proteins (T component).

The protein localises to the cell membrane. ATP-binding (A) component of a common energy-coupling factor (ECF) ABC-transporter complex. Unlike classic ABC transporters this ECF transporter provides the energy necessary to transport a number of different substrates. This Oenococcus oeni (strain ATCC BAA-331 / PSU-1) protein is Energy-coupling factor transporter ATP-binding protein EcfA3.